The primary structure comprises 364 residues: Fructose-bisphosphate aldolase B (364 aa).

Residue Ala-2 is modified to N-acetylalanine. Residue Lys-13 is modified to N6-succinyllysine. Position 36 is a phosphoserine (Ser-36). Position 39 is a phosphothreonine (Thr-39). Arg-43 contributes to the beta-D-fructose 1,6-bisphosphate binding site. Residue Ser-89 is modified to Phosphoserine. Thr-119 carries the phosphothreonine modification. The residue at position 121 (Lys-121) is an N6-succinyllysine. Residue Ser-132 is modified to Phosphoserine. Residue Glu-188 is the Proton acceptor of the active site. The active-site Schiff-base intermediate with dihydroxyacetone-P is Lys-230. Phosphoserine is present on residues Ser-272, Ser-276, Ser-299, and Ser-301. 272 to 274 (SGG) contributes to the beta-D-fructose 1,6-bisphosphate binding site. Residue Arg-304 coordinates beta-D-fructose 1,6-bisphosphate. Ser-309 carries the phosphoserine modification. Lys-317 is modified (N6-succinyllysine).

This sequence belongs to the class I fructose-bisphosphate aldolase family. As to quaternary structure, homotetramer. Interacts with BBS1, BBS2, BBS4 and BBS7. Forms a ternary complex with G6PD and TP53; this interaction is direct.

The protein resides in the cytoplasm. It localises to the cytosol. Its subcellular location is the cytoskeleton. The protein localises to the microtubule organizing center. It is found in the centrosome. The protein resides in the centriolar satellite. It catalyses the reaction beta-D-fructose 1,6-bisphosphate = D-glyceraldehyde 3-phosphate + dihydroxyacetone phosphate. The catalysed reaction is beta-D-fructose 1-phosphate = D-glyceraldehyde + dihydroxyacetone phosphate. Its pathway is carbohydrate degradation; glycolysis; D-glyceraldehyde 3-phosphate and glycerone phosphate from D-glucose: step 4/4. It participates in carbohydrate biosynthesis; gluconeogenesis. It functions in the pathway carbohydrate metabolism; fructose metabolism. In terms of biological role, catalyzes the aldol cleavage of fructose 1,6-biphosphate to form two triosephosphates dihydroxyacetone phosphate and D-glyceraldehyde 3-phosphate in glycolysis as well as the reverse stereospecific aldol addition reaction in gluconeogenesis. In fructolysis, metabolizes fructose 1-phosphate derived from the phosphorylation of dietary fructose by fructokinase into dihydroxyacetone phosphate and D-glyceraldehyde. Acts as an adapter independently of its enzymatic activity, exerts a tumor suppressor role by stabilizing the ternary complex with G6PD and TP53 to inhibit G6PD activity and keep oxidative pentose phosphate metabolism in check. The polypeptide is Fructose-bisphosphate aldolase B (ALDOB) (Oryctolagus cuniculus (Rabbit)).